Consider the following 364-residue polypeptide: Fructose-1,6-bisphosphatase class 1 2 (364 aa).

E101, D123, L125, and D126 together coordinate Mg(2+). Residues D126–S129 and N218 contribute to the substrate site. E290 lines the Mg(2+) pocket.

This sequence belongs to the FBPase class 1 family. In terms of assembly, homotetramer. The cofactor is Mg(2+).

It is found in the cytoplasm. It catalyses the reaction beta-D-fructose 1,6-bisphosphate + H2O = beta-D-fructose 6-phosphate + phosphate. The protein operates within carbohydrate biosynthesis; gluconeogenesis. The protein is Fructose-1,6-bisphosphatase class 1 2 of Cupriavidus necator (strain ATCC 17699 / DSM 428 / KCTC 22496 / NCIMB 10442 / H16 / Stanier 337) (Ralstonia eutropha).